The primary structure comprises 3942 residues: Protein bassoon (3942 aa).

Residues 1-158 (MGNEASLEGG…PTSPYSVPQI (158 aa)) form a disordered region. A lipid anchor (N-myristoyl glycine) is attached at glycine 2. Over residues 9–29 (GGAGEGPLPPGGSGLGPGPGA) the composition is skewed to gly residues. Over residues 31-52 (KPPSALAGGGQLPVAGAARAAG) the composition is skewed to low complexity. The segment covering 53–71 (PPTPGLGPVPGPGPGPGPG) has biased composition (pro residues). The segment at 62–71 (PGPGPGPGPG) is 5 X 2 AA tandem repeats of P-G. Composition is skewed to polar residues over residues 85–98 (SQRT…QASA) and 127–154 (QVDS…SPYS). At serine 142 the chain carries Phosphoserine. Arginine 145 carries the omega-N-methylarginine modification. 2 consecutive C4-type zinc fingers follow at residues 167–190 (CPIC…CTQC) and 195–217 (CNQC…CLNC). Disordered regions lie at residues 228 to 341 (TTAP…EQTQ) and 362 to 457 (LMSV…KTMP). A compositionally biased stretch (polar residues) spans 230–240 (APRSKSQQQLH). Phosphoserine occurs at positions 241 and 245. Over residues 362-379 (LMSVQPEADTQGQPSPSK) the composition is skewed to polar residues. Over residues 395–407 (PRPPGSGPGPGPT) the composition is skewed to pro residues. C4-type zinc fingers lie at residues 464–487 (CPLC…CTAC) and 492–514 (CNLC…CLNC). 4 disordered regions span residues 525–937 (GEPA…LQGG), 950–1258 (GSYG…VAES), 1309–1553 (MDPM…WQQS), and 1573–1625 (RMVH…PSAG). Residues 528–541 (APLPLPTPQQPPAG) are compositionally biased toward pro residues. Tandem repeats lie at residues 570 to 576 (KASPQAT), 577 to 583 (KASPQAT), 584 to 590 (KASPQAT), 591 to 597 (KASPQTT), and 598 to 604 (KASPQAK). The interval 570-604 (KASPQATKASPQATKASPQATKASPQTTKASPQAK) is 5 X 7 AA tandem repeats of K-A-S-P-Q-[AT]-[AT]. Positions 573–600 (PQATKASPQATKASPQATKASPQTTKAS) are enriched in polar residues. Positions 632–645 (VPKPPPETTVPPGT) are enriched in pro residues. A compositionally biased stretch (polar residues) spans 684 to 693 (QDLSRSPQSL). The segment covering 694–708 (SDTGYSSDGVSSSQS) has biased composition (low complexity). The segment covering 709–718 (EITGVVQQEV) has biased composition (polar residues). Composition is skewed to acidic residues over residues 787–802 (FDSD…EDDS) and 865–876 (SAEEDNLEEDDT). At arginine 881 the chain carries Omega-N-methylarginine. The span at 895–905 (PRPESSQEPKR) shows a compositional bias: basic and acidic residues. Serine 980 bears the Phosphoserine mark. Residues 994-1011 (PASTPSYTSGTSPTSLSS) show a composition bias toward low complexity. A compositionally biased stretch (acidic residues) spans 1049–1062 (DSSEEEELREEEEL). Phosphoserine occurs at positions 1050 and 1051. Residues 1063–1076 (LREQEKMREVEQQR) show a composition bias toward basic and acidic residues. Serine 1100 is modified (phosphoserine). At threonine 1102 the chain carries Phosphothreonine. 2 positions are modified to phosphoserine: serine 1108 and serine 1114. Residues 1117 to 1132 (EELRQAAEMEELHRSS) are compositionally biased toward basic and acidic residues. Composition is skewed to low complexity over residues 1133–1143 (CSEYSPSPSLD) and 1173–1190 (SPTE…SGRP). Residues 1192–1207 (KSAEEAYEDMMRKAEM) show a composition bias toward basic and acidic residues. Residues 1209–1219 (QRQQGQVAGAR) show a composition bias toward low complexity. The segment covering 1226 to 1240 (SQPTGPRSQGSFEYQ) has biased composition (polar residues). Position 1236 is a phosphoserine (serine 1236). Residues 1333 to 1343 (SFSTSTSSDSS) are compositionally biased toward low complexity. Threonine 1354 carries O-linked (GlcNAc) threonine glycosylation. Basic and acidic residues predominate over residues 1357–1366 (FAKEPQDPLK). The span at 1370-1438 (SPVSSTLTSK…TTANYGSQTE (69 aa)) shows a compositional bias: polar residues. Threonine 1395 carries an O-linked (GlcNAc) threonine glycan. Serine 1482, serine 1491, and serine 1493 each carry phosphoserine. Positions 1488–1498 (STPSESPTFSP) are enriched in low complexity. Composition is skewed to polar residues over residues 1508 to 1522 (EFST…SSDI) and 1573 to 1609 (RMVH…SQMP). O-linked (GlcNAc) serine glycosylation is present at serine 1707. An omega-N-methylarginine mark is found at arginine 1792 and arginine 1796. At arginine 1806 the chain carries Asymmetric dimethylarginine; alternate. An Omega-N-methylarginine; alternate modification is found at arginine 1806. At arginine 1818 the chain carries Omega-N-methylarginine. Disordered regions lie at residues 1831 to 1865 (GVGL…TRKP) and 1926 to 1977 (PSAP…QRPY). The span at 1844 to 1856 (AEPHRATPAELRS) shows a compositional bias: basic and acidic residues. An O-linked (GlcNAc) threonine glycan is attached at threonine 1934. Phosphoserine is present on residues serine 1990 and serine 2046. Omega-N-methylarginine occurs at positions 2051 and 2081. An asymmetric dimethylarginine mark is found at arginine 2255, arginine 2265, and arginine 2270. O-linked (GlcNAc) threonine glycosylation occurs at threonine 2318. Disordered regions lie at residues 2327–2378 (PVAP…KQQE), 2476–2504 (EQKQ…TELA), and 2524–2663 (TEGP…STTA). Pro residues predominate over residues 2329 to 2342 (APAPGPAPAPPPGQ). Basic and acidic residues predominate over residues 2361–2378 (ASEKEEASQEDRQRKQQE). Coiled-coil stretches lie at residues 2366 to 2422 (EASQ…LVQR) and 2453 to 2483 (LAQQ…RQKA). A glycan (O-linked (GlcNAc) threonine) is linked at threonine 2524. A compositionally biased stretch (polar residues) spans 2541–2551 (SSASDMSLQTE). Serine 2578 carries the phosphoserine modification. Phosphothreonine occurs at positions 2595 and 2622. The segment covering 2643 to 2655 (RHSDSGSDSKHDA) has biased composition (basic and acidic residues). A glycan (O-linked (GlcNAc) threonine) is linked at threonine 2700. An interaction with DAO region spans residues 2730 to 3278 (EPDGQAQGVA…GGVSGRPGKD (549 aa)). Serine 2811, serine 2860, and serine 2866 each carry phosphoserine. Positions 2854–2874 (TLQRSLSDPKPLSPTAEESAK) are disordered. An O-linked (GlcNAc) threonine glycan is attached at threonine 2945. Serine 3022 carries the post-translational modification Phosphoserine. Disordered regions lie at residues 3051–3409 (PATP…LTSR), 3431–3560 (YYGV…PRAH), and 3581–3917 (EAYH…KILP). Polar residues predominate over residues 3073–3083 (TAGSSGPTQNG). The segment covering 3089–3114 (APTYTGPSTYPAPTYPPGTGYPAEPG) has biased composition (low complexity). The span at 3202-3211 (KAPEHPRGSD) shows a compositional bias: basic and acidic residues. Residues 3212–3237 (RSSVSQSPAPTYPSDSHYTSLEQNVP) are compositionally biased toward polar residues. Serine 3301 bears the Phosphoserine mark. Basic and acidic residues-rich tracts occupy residues 3330 to 3342 (GDSD…RADK) and 3372 to 3391 (QGME…KDVE). The residue at position 3382 (serine 3382) is a Phosphoserine. A compositionally biased stretch (low complexity) spans 3447–3461 (YGSSSRSRMASAYSG). Over residues 3464-3487 (LSSHDYSSRGKGYERERDTAERLQ) the composition is skewed to basic and acidic residues. An Omega-N-methylarginine modification is found at arginine 3502. A compositionally biased stretch (low complexity) spans 3520-3534 (PLGRPRPAGGALPPG). 2 stretches are compositionally biased toward basic and acidic residues: residues 3549–3560 (VQEHVKDGPRAH) and 3592–3602 (WFDKPRDARSD). The span at 3652-3665 (EHRHHSDHGRHSGR) shows a compositional bias: basic residues. A compositionally biased stretch (basic and acidic residues) spans 3666–3690 (HAGEEPGRRAAKPHARDMGRHEARP). Positions 3750 to 3820 (TQAQPQMQGR…QARLQPQSQP (71 aa)) are enriched in low complexity. Omega-N-methylarginine is present on arginine 3823. Over residues 3835-3851 (KPQPGPTTAPGPQPAGP) the composition is skewed to pro residues. Residues 3856–3891 (QASSSKPPAAKAPQQGRAPQAQTTPGPGPAGAKPGA) are compositionally biased toward low complexity.

As to quaternary structure, interacts with PCLO, ERC2/CAST1, RIMS1 and UNC13A. Interacts with TPRG1L. Interacts with DYNLL1 and DYNLL2; these interactions potentially link PTVs to dynein and myosin V motor complexes. Interacts with ATG5; this interaction is important for the regulation of presynaptic autophagy. Interacts (via C-terminus) with TRIO (via N-terminus). Interacts with CTBP1. Interacts with SIAH1; this interaction negatively regulates SIAH1 E3 ligase activity. Interacts (via coiled region) with DAO; the interaction is direct. Myristoylated. The N-terminal myristoylation is not sufficient for presynaptic localization. As to expression, expressed in brain and retina.

The protein localises to the cytoplasm. It localises to the presynaptic active zone. The protein resides in the cytoskeleton. It is found in the cytoplasmic vesicle. Its subcellular location is the secretory vesicle. The protein localises to the synaptic vesicle membrane. Scaffold protein of the presynaptic cytomatrix at the active zone (CAZ) which is the place in the synapse where neurotransmitter is released. After synthesis, participates in the formation of Golgi-derived membranous organelles termed Piccolo-Bassoon transport vesicles (PTVs) that are transported along axons to sites of nascent synaptic contacts. At the presynaptic active zone, regulates the spatial organization of synaptic vesicle cluster, the protein complexes that execute membrane fusion and compensatory endocytosis. Also functions in processes other than assembly such as the regulation of specific presynaptic protein ubiquitination by interacting with SIAH1 or the regulation of presynaptic autophagy by associating with ATG5. Also mediates synapse to nucleus communication leading to reconfiguration of gene expression by associating with the transcriptional corepressor CTBP1 and by subsequently reducing the size of its pool available for nuclear import. Inhibits the activity of the proportion of DAO enzyme that localizes to the presynaptic active zone, which may modulate synaptic transmission. The polypeptide is Protein bassoon (Mus musculus (Mouse)).